Consider the following 546-residue polypeptide: Src substrate cortactin (546 aa).

Positions Met-1–Phe-28 are disordered. A compositionally biased stretch (acidic residues) spans Gly-17–Phe-28. Cortactin repeat units follow at residues Ala-80 to Asp-116, Ser-117 to Asp-153, Tyr-154 to Asp-190, Tyr-191 to Asp-227, Tyr-228 to Asp-264, and Tyr-265 to Asp-301. 2 positions are modified to N6-acetyllysine: Lys-87 and Lys-107. The residue at position 113 (Ser-113) is a Phosphoserine. Arg-119 carries the post-translational modification Omega-N-methylarginine. N6-acetyllysine is present on Lys-124. Position 144 is an N6-acetyllysine; alternate (Lys-144). Lys-144 participates in a covalent cross-link: Glycyl lysine isopeptide (Lys-Gly) (interchain with G-Cter in SUMO1); alternate. Lys-144 is covalently cross-linked (Glycyl lysine isopeptide (Lys-Gly) (interchain with G-Cter in SUMO2); alternate). Ser-150 bears the Phosphoserine mark. An N6-acetyllysine mark is found at Lys-152, Lys-161, and Lys-171. Lys-181 carries the post-translational modification N6-acetyllysine; alternate. Residue Lys-181 forms a Glycyl lysine isopeptide (Lys-Gly) (interchain with G-Cter in SUMO1); alternate linkage. Residue Lys-181 forms a Glycyl lysine isopeptide (Lys-Gly) (interchain with G-Cter in SUMO2); alternate linkage. An N6-acetyllysine mark is found at Lys-193 and Lys-198. A Glycyl lysine isopeptide (Lys-Gly) (interchain with G-Cter in SUMO1) cross-link involves residue Lys-218. An N6-acetyllysine modification is found at Lys-235. Ser-261 is subject to Phosphoserine. Residue Lys-272 is modified to N6-acetyllysine. At Lys-295 the chain carries N6-acetyllysine; alternate. Residue Lys-295 forms a Glycyl lysine isopeptide (Lys-Gly) (interchain with G-Cter in SUMO2); alternate linkage. The Cortactin 7; truncated repeat unit spans residues Tyr-302–Phe-324. Lys-304, Lys-309, Lys-314, and Lys-346 each carry N6-acetyllysine. Residues Ser-348 to Thr-401 are a coiled coil. The segment at Glu-355–Ala-424 is disordered. Residues Leu-357–Arg-396 show a composition bias toward basic and acidic residues. At Thr-401 the chain carries Phosphothreonine. Phosphoserine occurs at positions 405, 407, 417, and 418. Phosphotyrosine is present on residues Tyr-421 and Tyr-442. Ser-443 is subject to Phosphoserine. Tyr-466 bears the Phosphotyrosine; by FAK1 mark. Tyr-482 and Tyr-485 each carry phosphotyrosine; by SRC. Positions Asp-488–Gln-546 constitute an SH3 domain.

As to quaternary structure, part of a complex composed of NEDD9, AURKA and CTTN; within the complex NEDD9 acts as a scaffold protein and is required for complex formation. Interacts (via N-terminus) with NEDD9. Identified in a complex containing FGFR4, NCAM1, CDH2, PLCG1, FRS2, SRC, SHC1, GAP43 and CTTN. Forms a complex with ABL1 and MYLK. Interacts with SHANK2 and SHANK3 (via its SH3 domain). Interacts with PLXDC2 and SRCIN1. Interacts with SAMSN1 (via SH3 domain). Interacts (via SH3 domain) with ASAP1 (via Pro-rich region). Interacts (via SH3 domain) with DNM2. Interacts with ACTN1. Interacts with FER. Interacts with KCNA2 (via non-phosphorylated C-terminus). Interacts with FGD1. Interacts with ABL2. Interacts with CTTNBP2NL; this interaction may target CTTN to stress fibers. Interacts with CTTNBP2; this interaction may target CTTN at the cell cortex or dendritic spines. Interacts with KCNH1. Interacts (via SH3 domain) with DIP2A (via N-terminus); the interaction enhances CTTN acetylation and is required for proper synaptic transmission. Interacts with XIRP1 (via N-terminus); the interaction promotes CTTN localization to intercalated disks in cardiomyocytes. In terms of processing, acetylated. Phosphorylated by FER. Phosphorylated in response to FGR activation. Phosphorylation by SRC promotes MYLK binding. Phosphorylated on tyrosine residues in response to CHRM1 activation. Phosphorylated by PTK2/FAK1 in response to cell adhesion. Tyrosine phosphorylation in transformed cells may contribute to cellular growth regulation and transformation. Phosphorylated by PKN2 at both serine and threonine residues in a GTP-bound Rac1-dependent manner in hyaluronan-induced astrocytes and hence down-regulated CTTN ability to associate with filamentous actin. In terms of tissue distribution, expressed at intercalated disks in the heart (at protein level). Expressed in most tissues, except in B-lymphocytes or plasma cells.

The protein localises to the cytoplasm. Its subcellular location is the cytoskeleton. It is found in the cell projection. The protein resides in the lamellipodium. It localises to the ruffle. The protein localises to the dendrite. Its subcellular location is the cell membrane. It is found in the podosome. The protein resides in the cell junction. It localises to the focal adhesion. The protein localises to the membrane. Its subcellular location is the clathrin-coated pit. It is found in the dendritic spine. The protein resides in the cell cortex. It localises to the endoplasmic reticulum. Its function is as follows. Contributes to the organization of the actin cytoskeleton and cell shape. Plays a role in the formation of lamellipodia and in cell migration. Plays a role in the regulation of neuron morphology, axon growth and formation of neuronal growth cones. Through its interaction with CTTNBP2, involved in the regulation of neuronal spine density. Plays a role in focal adhesion assembly and turnover. In complex with ABL1 and MYLK regulates cortical actin-based cytoskeletal rearrangement critical to sphingosine 1-phosphate (S1P)-mediated endothelial cell (EC) barrier enhancement. Plays a role in intracellular protein transport and endocytosis, and in modulating the levels of potassium channels present at the cell membrane. Plays a role in receptor-mediated endocytosis via clathrin-coated pits. Required for stabilization of KCNH1 channels at the cell membrane. The polypeptide is Src substrate cortactin (Cttn) (Mus musculus (Mouse)).